A 414-amino-acid polypeptide reads, in one-letter code: Histidine--tRNA ligase (414 aa).

The protein belongs to the class-II aminoacyl-tRNA synthetase family. As to quaternary structure, homodimer.

It is found in the cytoplasm. The catalysed reaction is tRNA(His) + L-histidine + ATP = L-histidyl-tRNA(His) + AMP + diphosphate + H(+). The chain is Histidine--tRNA ligase from Mycoplasma capricolum subsp. capricolum (strain California kid / ATCC 27343 / NCTC 10154).